The chain runs to 302 residues: UDP-3-O-acyl-N-acetylglucosamine deacetylase (302 aa).

Zn(2+) is bound by residues His-78, His-235, and Asp-239. The Proton donor role is filled by His-262.

This sequence belongs to the LpxC family. Requires Zn(2+) as cofactor.

The catalysed reaction is a UDP-3-O-[(3R)-3-hydroxyacyl]-N-acetyl-alpha-D-glucosamine + H2O = a UDP-3-O-[(3R)-3-hydroxyacyl]-alpha-D-glucosamine + acetate. Its pathway is glycolipid biosynthesis; lipid IV(A) biosynthesis; lipid IV(A) from (3R)-3-hydroxytetradecanoyl-[acyl-carrier-protein] and UDP-N-acetyl-alpha-D-glucosamine: step 2/6. Catalyzes the hydrolysis of UDP-3-O-myristoyl-N-acetylglucosamine to form UDP-3-O-myristoylglucosamine and acetate, the committed step in lipid A biosynthesis. This is UDP-3-O-acyl-N-acetylglucosamine deacetylase from Bdellovibrio bacteriovorus (strain ATCC 15356 / DSM 50701 / NCIMB 9529 / HD100).